A 220-amino-acid polypeptide reads, in one-letter code: Deoxyribose-phosphate aldolase (220 aa).

Catalysis depends on D89, which acts as the Proton donor/acceptor. Residue K151 is the Schiff-base intermediate with acetaldehyde of the active site. Residue K180 is the Proton donor/acceptor of the active site.

It belongs to the DeoC/FbaB aldolase family. DeoC type 1 subfamily.

It localises to the cytoplasm. It carries out the reaction 2-deoxy-D-ribose 5-phosphate = D-glyceraldehyde 3-phosphate + acetaldehyde. Its pathway is carbohydrate degradation; 2-deoxy-D-ribose 1-phosphate degradation; D-glyceraldehyde 3-phosphate and acetaldehyde from 2-deoxy-alpha-D-ribose 1-phosphate: step 2/2. Its function is as follows. Catalyzes a reversible aldol reaction between acetaldehyde and D-glyceraldehyde 3-phosphate to generate 2-deoxy-D-ribose 5-phosphate. This is Deoxyribose-phosphate aldolase from Streptococcus pneumoniae (strain Taiwan19F-14).